The following is a 579-amino-acid chain: V-type ATP synthase alpha chain (579 aa).

227–234 (GGFGTGKT) contributes to the ATP binding site.

The protein belongs to the ATPase alpha/beta chains family.

The catalysed reaction is ATP + H2O + 4 H(+)(in) = ADP + phosphate + 5 H(+)(out). Produces ATP from ADP in the presence of a proton gradient across the membrane. The V-type alpha chain is a catalytic subunit. This chain is V-type ATP synthase alpha chain, found in Anaeromyxobacter dehalogenans (strain 2CP-1 / ATCC BAA-258).